The sequence spans 202 residues: Molybdenum cofactor guanylyltransferase (202 aa).

GTP-binding positions include Leu9–Gly11, Lys22, Asp70, and Asp96. Asp96 provides a ligand contact to Mg(2+).

It belongs to the MobA family. In terms of assembly, monomer. Mg(2+) is required as a cofactor.

The protein resides in the cytoplasm. It catalyses the reaction Mo-molybdopterin + GTP + H(+) = Mo-molybdopterin guanine dinucleotide + diphosphate. Its function is as follows. Transfers a GMP moiety from GTP to Mo-molybdopterin (Mo-MPT) cofactor (Moco or molybdenum cofactor) to form Mo-molybdopterin guanine dinucleotide (Mo-MGD) cofactor. This chain is Molybdenum cofactor guanylyltransferase, found in Desulfosudis oleivorans (strain DSM 6200 / JCM 39069 / Hxd3) (Desulfococcus oleovorans).